A 527-amino-acid chain; its full sequence is Zinc finger C2HC domain-containing protein 1C (527 aa).

Disordered stretches follow at residues 18-105 (HNKT…GQGK) and 145-170 (VHRK…LPDS). The segment covering 50–61 (NSFQSKLWSNTE) has biased composition (polar residues). Residues 71-85 (RPKRNVCTKARRHSC) are compositionally biased toward basic residues. The span at 93-102 (QQGSGNNAQG) shows a compositional bias: low complexity. Positions 207–254 (TQIQRLEAAGESLQKEIRRKEILLQEKLKKTEEGLRRMQKEKKQAIFQ) form a coiled coil. Disordered regions lie at residues 264–316 (LPRR…LSDY) and 352–379 (LGST…EPEL). The span at 286–298 (FRSEVFSRNRGED) shows a compositional bias: basic and acidic residues. Residues 301 to 312 (CDQAQENPSPRQ) are compositionally biased toward polar residues. Low complexity predominate over residues 358–374 (ESSRSGTPGSSGSSSST). 2 C2HC/C3H-type zinc fingers span residues 378–407 (ELAK…MQGS) and 489–518 (DYVQ…IKNR). Positions 382, 385, 397, 401, 493, 496, 508, and 512 each coordinate Zn(2+). The tract at residues 507–527 (RHIPKCKTIKNRPPPPRRHDS) is disordered.

Belongs to the ZC2HC1 family. The cofactor is Zn(2+).

The sequence is that of Zinc finger C2HC domain-containing protein 1C (Zc2hc1c) from Mus musculus (Mouse).